Here is a 1184-residue protein sequence, read N- to C-terminus: Protein stu1 (1184 aa).

2 HEAT repeats span residues 92-130 (FCPV…EHYV) and 162-194 (RSYV…FQGA). Composition is skewed to basic and acidic residues over residues 229–240 (SSTARPRSRVEP) and 308–317 (EAEKAPHMET). Residues 229-336 (SSTARPRSRV…APQPLHAETS (108 aa)) form a disordered region. Residues 463 to 499 (VTYTPRLLQHVTSACQDKNAQLRLFAAGWLKTLLNKQ) form an HEAT 3 repeat. Disordered regions lie at residues 564 to 584 (LEKD…SDTL) and 602 to 906 (ARLA…RVEE). Polar residues predominate over residues 572-584 (NRDQSSYLSSDTL). Over residues 640–649 (APLSSLSSAP) the composition is skewed to low complexity. Positions 723–737 (SASNENETQVATQVA) are enriched in polar residues. 2 stretches are compositionally biased toward basic and acidic residues: residues 787 to 811 (AGRH…ENKL) and 882 to 895 (EQDR…DSAE).

Belongs to the CLASP family. In terms of assembly, interacts with microtubules.

The protein localises to the cytoplasm. The protein resides in the cytoskeleton. It localises to the nucleus. Its subcellular location is the spindle. Its function is as follows. Microtubule binding protein that promotes the stabilization of dynamic microtubules. Required for mitotic spindle formation. This chain is Protein stu1 (stu1), found in Aspergillus oryzae (strain ATCC 42149 / RIB 40) (Yellow koji mold).